We begin with the raw amino-acid sequence, 120 residues long: Large ribosomal subunit protein eL34x (120 aa).

Residues 31-50 (TYQTTNKRASGPKCPVTGKR) are disordered.

Belongs to the eukaryotic ribosomal protein eL34 family.

The chain is Large ribosomal subunit protein eL34x (RPL34C) from Arabidopsis thaliana (Mouse-ear cress).